Reading from the N-terminus, the 188-residue chain is uncharacterized protein (188 aa).

The segment covering 1–15 (MVSSKDKIKEELKQE) has biased composition (basic and acidic residues). The segment at 1-21 (MVSSKDKIKEELKQEEPEENV) is disordered.

This is an uncharacterized protein from Saccharolobus islandicus (Sulfolobus islandicus).